Consider the following 378-residue polypeptide: 1-acyl-sn-glycerol-3-phosphate acyltransferase delta (378 aa).

The helical transmembrane segment at 11–31 (FLCHLVFCYVFIASGLIINTI) threads the bilayer. Residues 96-101 (HKFEID) carry the HXXXXD motif motif. A run of 3 helical transmembrane segments spans residues 125–145 (ELAY…VFCS), 307–327 (TLVN…QFLV), and 338–358 (LASF…MIGV).

The protein belongs to the 1-acyl-sn-glycerol-3-phosphate acyltransferase family. Widely expressed with highest levels in skeletal muscle, followed by heart, liver, prostate and thymus.

It localises to the endoplasmic reticulum membrane. The enzyme catalyses a 1-acyl-sn-glycero-3-phosphate + an acyl-CoA = a 1,2-diacyl-sn-glycero-3-phosphate + CoA. The catalysed reaction is (4Z,7Z,10Z,13Z,16Z,19Z)-docosahexaenoyl-CoA + 1-hexadecanoyl-sn-glycero-3-phosphate = 1-hexadecanoyl-2-(4Z,7Z,10Z,13Z,16Z,19Z-docosahexaenoyl)-sn-glycero-3-phosphate + CoA. It carries out the reaction 1-octadecanoyl-sn-glycero-3-phosphate + (9Z,12Z)-octadecadienoyl-CoA = 1-octadecanoyl-2-(9Z,12Z-octadecadienoyl)-sn-glycero-3-phosphate + CoA. It catalyses the reaction 1-octadecanoyl-sn-glycero-3-phosphate + (4Z,7Z,10Z,13Z,16Z,19Z)-docosahexaenoyl-CoA = 1-octadecanoyl-2-(4Z,7Z,10Z,13Z,16Z,19Z-docosahexaenoyl)-sn-glycero-3-phosphate + CoA. The enzyme catalyses (4Z,7Z,10Z,13Z,16Z,19Z)-docosahexaenoyl-CoA + 1-(9Z-octadecenoyl)-sn-glycero-3-phosphate = 1-(9Z-octadecenoyl)-2-(4Z,7Z,10Z,13Z,16Z,19Z-docosahexaenoyl)-sn-glycero-3-phosphate + CoA. It participates in phospholipid metabolism; CDP-diacylglycerol biosynthesis; CDP-diacylglycerol from sn-glycerol 3-phosphate: step 2/3. Converts 1-acyl-sn-glycerol-3-phosphate (lysophosphatidic acid or LPA) into 1,2-diacyl-sn-glycerol-3-phosphate (phosphatidic acid or PA) by incorporating an acyl moiety at the sn-2 position of the glycerol backbone. Exhibits high acyl-CoA specificity for polyunsaturated fatty acyl-CoA, especially docosahexaenoyl-CoA (22:6-CoA, DHA-CoA). This is 1-acyl-sn-glycerol-3-phosphate acyltransferase delta (AGPAT4) from Homo sapiens (Human).